Consider the following 806-residue polypeptide: Glycerol-3-phosphate acyltransferase (806 aa).

Residues 305–310 (CHRSHM) carry the HXXXXD motif motif.

This sequence belongs to the GPAT/DAPAT family.

Its subcellular location is the cell inner membrane. The enzyme catalyses sn-glycerol 3-phosphate + an acyl-CoA = a 1-acyl-sn-glycero-3-phosphate + CoA. Its pathway is phospholipid metabolism; CDP-diacylglycerol biosynthesis; CDP-diacylglycerol from sn-glycerol 3-phosphate: step 1/3. The sequence is that of Glycerol-3-phosphate acyltransferase from Salmonella paratyphi A (strain ATCC 9150 / SARB42).